A 337-amino-acid chain; its full sequence is Adenosine deaminase (337 aa).

His-12 and His-14 together coordinate Zn(2+). The substrate site is built by His-14, Asp-16, and Gly-170. His-197 contacts Zn(2+). The Proton donor role is filled by Glu-200. Position 278 (Asp-278) interacts with Zn(2+). Position 279 (Asp-279) interacts with substrate.

It belongs to the metallo-dependent hydrolases superfamily. Adenosine and AMP deaminases family. Adenosine deaminase subfamily. Zn(2+) serves as cofactor.

The catalysed reaction is adenosine + H2O + H(+) = inosine + NH4(+). It carries out the reaction 2'-deoxyadenosine + H2O + H(+) = 2'-deoxyinosine + NH4(+). Its function is as follows. Catalyzes the hydrolytic deamination of adenosine and 2-deoxyadenosine. The protein is Adenosine deaminase of Pectobacterium atrosepticum (strain SCRI 1043 / ATCC BAA-672) (Erwinia carotovora subsp. atroseptica).